The following is a 525-amino-acid chain: Peptide chain release factor 3 (525 aa).

The tr-type G domain occupies 11–279 (DKRRTFAIIS…TYLEYAPQPA (269 aa)). Residues 20–27 (SHPDAGKT), 88–92 (DTPGH), and 142–145 (NKLD) each bind GTP.

Belongs to the TRAFAC class translation factor GTPase superfamily. Classic translation factor GTPase family. PrfC subfamily.

The protein resides in the cytoplasm. In terms of biological role, increases the formation of ribosomal termination complexes and stimulates activities of RF-1 and RF-2. It binds guanine nucleotides and has strong preference for UGA stop codons. It may interact directly with the ribosome. The stimulation of RF-1 and RF-2 is significantly reduced by GTP and GDP, but not by GMP. This Levilactobacillus brevis (strain ATCC 367 / BCRC 12310 / CIP 105137 / JCM 1170 / LMG 11437 / NCIMB 947 / NCTC 947) (Lactobacillus brevis) protein is Peptide chain release factor 3.